The primary structure comprises 397 residues: Serpin B10 (397 aa).

The Nuclear localization signal motif lies at 74-77 (KKRK).

This sequence belongs to the serpin family. Ov-serpin subfamily.

It is found in the nucleus. The protein localises to the cytoplasm. In terms of biological role, protease inhibitor that may play a role in the regulation of protease activities during hematopoiesis and apoptosis induced by TNF. May regulate protease activities in the cytoplasm and in the nucleus. In Rhinolophus ferrumequinum (Greater horseshoe bat), this protein is Serpin B10 (SERPINB10).